A 292-amino-acid polypeptide reads, in one-letter code: 4-hydroxy-tetrahydrodipicolinate synthase (292 aa).

Thr45 serves as a coordination point for pyruvate. Tyr133 serves as the catalytic Proton donor/acceptor. The active-site Schiff-base intermediate with substrate is Lys161. Ile203 serves as a coordination point for pyruvate.

This sequence belongs to the DapA family. Homodimer.

It localises to the cytoplasm. It catalyses the reaction L-aspartate 4-semialdehyde + pyruvate = (2S,4S)-4-hydroxy-2,3,4,5-tetrahydrodipicolinate + H2O + H(+). It functions in the pathway amino-acid biosynthesis; L-lysine biosynthesis via DAP pathway; (S)-tetrahydrodipicolinate from L-aspartate: step 3/4. Functionally, catalyzes the condensation of (S)-aspartate-beta-semialdehyde [(S)-ASA] and pyruvate to 4-hydroxy-tetrahydrodipicolinate (HTPA). In Stutzerimonas stutzeri (strain A1501) (Pseudomonas stutzeri), this protein is 4-hydroxy-tetrahydrodipicolinate synthase.